A 346-amino-acid chain; its full sequence is Cyclin-dependent kinase 7 (346 aa).

A2 is subject to N-acetylalanine. Position 7 is a phosphoserine (S7). A Protein kinase domain is found at 12-295 (YEKLDFLGEG…ASQALKTKYF (284 aa)). ATP-binding positions include 18–26 (LGEGQFATV) and K41. Catalysis depends on D137, which acts as the Proton acceptor. S164 is subject to Phosphoserine; by CDK1 and CDK2. Residue T170 is modified to Phosphothreonine; by CDK2.

This sequence belongs to the protein kinase superfamily. CMGC Ser/Thr protein kinase family. CDC2/CDKX subfamily. In terms of assembly, associates primarily with cyclin-H (CCNH) and MAT1 to form the CAK complex. CAK can further associate with the core-TFIIH to form the TFIIH basal transcription factor; this complex is sensitive to UV light. The CAK complex binds to p53/TP53 in response to DNA damage. Interacts with CDK2, SF1/NR5A1, PUF60 and PRKCI. Interacts with HINT1. In terms of processing, phosphorylation of Ser-164 during mitosis inactivates the enzyme. Phosphorylation of Thr-170 is required for activity. Phosphorylated at Ser-164 and Thr-170 by CDK2.

It is found in the nucleus. The protein resides in the cytoplasm. It localises to the perinuclear region. The enzyme catalyses L-seryl-[protein] + ATP = O-phospho-L-seryl-[protein] + ADP + H(+). It carries out the reaction L-threonyl-[protein] + ATP = O-phospho-L-threonyl-[protein] + ADP + H(+). It catalyses the reaction [DNA-directed RNA polymerase] + ATP = phospho-[DNA-directed RNA polymerase] + ADP + H(+). With respect to regulation, phosphorylation at Thr-170 is required for enzymatic activity. The association of p53/TP53 to the CAK complex in response to DNA damage reduces kinase activity toward CDK2 and RNA polymerase II repetitive C-terminal domain (CTD), thus stopping cell cycle progression. In terms of biological role, serine/threonine kinase involved in cell cycle control and in RNA polymerase II-mediated RNA transcription. Cyclin-dependent kinases (CDKs) are activated by the binding to a cyclin and mediate the progression through the cell cycle. Each different complex controls a specific transition between 2 subsequent phases in the cell cycle. Required for both activation and complex formation of CDK1/cyclin-B during G2-M transition, and for activation of CDK2/cyclins during G1-S transition (but not complex formation). CDK7 is the catalytic subunit of the CDK-activating kinase (CAK) complex. Phosphorylates SPT5/SUPT5H, SF1/NR5A1, POLR2A, p53/TP53, CDK1, CDK2, CDK4, CDK6 and CDK11B/CDK11. Initiates transcription by RNA polymerase II by mediating phosphorylation of POLR2A at 'Ser-5' of the repetitive C-terminal domain (CTD) when POLR2A is in complex with DNA, promoting dissociation from DNA and initiation. CAK activates the cyclin-associated kinases CDK1, CDK2, CDK4 and CDK6 by threonine phosphorylation, thus regulating cell cycle progression. CAK complexed to the core-TFIIH basal transcription factor activates RNA polymerase II by serine phosphorylation of the CTD of POLR2A, allowing its escape from the promoter and elongation of the transcripts. Its expression and activity are constant throughout the cell cycle. Upon DNA damage, triggers p53/TP53 activation by phosphorylation, but is inactivated in turn by p53/TP53; this feedback loop may lead to an arrest of the cell cycle and of the transcription, helping in cell recovery, or to apoptosis. Required for DNA-bound peptides-mediated transcription and cellular growth inhibition. The polypeptide is Cyclin-dependent kinase 7 (Cdk7) (Mus musculus (Mouse)).